The primary structure comprises 339 residues: tRNA(Ile)-lysidine synthase (339 aa).

Residue 34 to 39 (SGGPDS) coordinates ATP.

It belongs to the tRNA(Ile)-lysidine synthase family.

It localises to the cytoplasm. It catalyses the reaction cytidine(34) in tRNA(Ile2) + L-lysine + ATP = lysidine(34) in tRNA(Ile2) + AMP + diphosphate + H(+). Ligates lysine onto the cytidine present at position 34 of the AUA codon-specific tRNA(Ile) that contains the anticodon CAU, in an ATP-dependent manner. Cytidine is converted to lysidine, thus changing the amino acid specificity of the tRNA from methionine to isoleucine. This chain is tRNA(Ile)-lysidine synthase, found in Methylobacterium nodulans (strain LMG 21967 / CNCM I-2342 / ORS 2060).